Here is an 89-residue protein sequence, read N- to C-terminus: Small ribosomal subunit protein uS15 (89 aa).

The segment covering 1–21 has biased composition (basic and acidic residues); sequence MALTTEEKKQVLSEYGLHETD. A disordered region spans residues 1-24; that stretch reads MALTTEEKKQVLSEYGLHETDTGS.

This sequence belongs to the universal ribosomal protein uS15 family. Part of the 30S ribosomal subunit. Forms a bridge to the 50S subunit in the 70S ribosome, contacting the 23S rRNA.

In terms of biological role, one of the primary rRNA binding proteins, it binds directly to 16S rRNA where it helps nucleate assembly of the platform of the 30S subunit by binding and bridging several RNA helices of the 16S rRNA. Its function is as follows. Forms an intersubunit bridge (bridge B4) with the 23S rRNA of the 50S subunit in the ribosome. In Rhodococcus opacus (strain B4), this protein is Small ribosomal subunit protein uS15.